The following is a 1196-amino-acid chain: DNA-directed RNA polymerase subunit beta (1196 aa).

A compositionally biased stretch (acidic residues) spans 1152 to 1165 (EEEIEMRDLEDEED). The tract at residues 1152 to 1196 (EEEIEMRDLEDEEDAKQADGLALSGDEAPEETASPDVERDAVTKE) is disordered. Over residues 1187-1196 (DVERDAVTKE) the composition is skewed to basic and acidic residues.

This sequence belongs to the RNA polymerase beta chain family. In terms of assembly, the RNAP catalytic core consists of 2 alpha, 1 beta, 1 beta' and 1 omega subunit. When a sigma factor is associated with the core the holoenzyme is formed, which can initiate transcription.

It catalyses the reaction RNA(n) + a ribonucleoside 5'-triphosphate = RNA(n+1) + diphosphate. Its function is as follows. DNA-dependent RNA polymerase catalyzes the transcription of DNA into RNA using the four ribonucleoside triphosphates as substrates. The chain is DNA-directed RNA polymerase subunit beta from Bacillus velezensis (strain DSM 23117 / BGSC 10A6 / LMG 26770 / FZB42) (Bacillus amyloliquefaciens subsp. plantarum).